The chain runs to 109 residues: ATP-dependent Clp protease adapter protein ClpS (109 aa).

The interval 1 to 21 (MAERKQGGQNNGAGSSVITEV) is disordered.

The protein belongs to the ClpS family. Binds to the N-terminal domain of the chaperone ClpA.

Involved in the modulation of the specificity of the ClpAP-mediated ATP-dependent protein degradation. The polypeptide is ATP-dependent Clp protease adapter protein ClpS (Caulobacter sp. (strain K31)).